The chain runs to 39 residues: Photosystem II reaction center protein L (39 aa).

A helical membrane pass occupies residues 18–38; sequence SLYLGLLFVFVTGVLMSSYFF.

This sequence belongs to the PsbL family. As to quaternary structure, PSII is composed of 1 copy each of membrane proteins PsbA, PsbB, PsbC, PsbD, PsbE, PsbF, PsbH, PsbI, PsbJ, PsbK, PsbL, PsbM, PsbT, PsbX, PsbY, PsbZ, Psb30/Ycf12, peripheral proteins PsbO, CyanoQ (PsbQ), PsbU, PsbV and a large number of cofactors. It forms dimeric complexes.

The protein resides in the cellular thylakoid membrane. In terms of biological role, one of the components of the core complex of photosystem II (PSII). PSII is a light-driven water:plastoquinone oxidoreductase that uses light energy to abstract electrons from H(2)O, generating O(2) and a proton gradient subsequently used for ATP formation. It consists of a core antenna complex that captures photons, and an electron transfer chain that converts photonic excitation into a charge separation. This subunit is found at the monomer-monomer interface and is required for correct PSII assembly and/or dimerization. The protein is Photosystem II reaction center protein L of Synechococcus sp. (strain CC9902).